The sequence spans 118 residues: Putative pterin-4-alpha-carbinolamine dehydratase (118 aa).

The protein belongs to the pterin-4-alpha-carbinolamine dehydratase family.

The enzyme catalyses (4aS,6R)-4a-hydroxy-L-erythro-5,6,7,8-tetrahydrobiopterin = (6R)-L-erythro-6,7-dihydrobiopterin + H2O. The chain is Putative pterin-4-alpha-carbinolamine dehydratase from Pseudomonas entomophila (strain L48).